The following is a 264-amino-acid chain: Thymidylate synthase (264 aa).

Arg21 contributes to the dUMP binding site. Residue His51 participates in (6R)-5,10-methylene-5,6,7,8-tetrahydrofolate binding. 126–127 serves as a coordination point for dUMP; it reads RR. Catalysis depends on Cys146, which acts as the Nucleophile. Residues 166-169, Asn177, and 207-209 contribute to the dUMP site; these read RSAD and HLY. Asp169 contacts (6R)-5,10-methylene-5,6,7,8-tetrahydrofolate. Position 263 (Ala263) interacts with (6R)-5,10-methylene-5,6,7,8-tetrahydrofolate.

Belongs to the thymidylate synthase family. Bacterial-type ThyA subfamily. Homodimer.

It localises to the cytoplasm. It carries out the reaction dUMP + (6R)-5,10-methylene-5,6,7,8-tetrahydrofolate = 7,8-dihydrofolate + dTMP. It functions in the pathway pyrimidine metabolism; dTTP biosynthesis. In terms of biological role, catalyzes the reductive methylation of 2'-deoxyuridine-5'-monophosphate (dUMP) to 2'-deoxythymidine-5'-monophosphate (dTMP) while utilizing 5,10-methylenetetrahydrofolate (mTHF) as the methyl donor and reductant in the reaction, yielding dihydrofolate (DHF) as a by-product. This enzymatic reaction provides an intracellular de novo source of dTMP, an essential precursor for DNA biosynthesis. The chain is Thymidylate synthase from Alkalilimnicola ehrlichii (strain ATCC BAA-1101 / DSM 17681 / MLHE-1).